Here is a 180-residue protein sequence, read N- to C-terminus: GTP cyclohydrolase 1 (180 aa).

Zn(2+)-binding residues include C71, H74, and C142.

It belongs to the GTP cyclohydrolase I family. In terms of assembly, toroid-shaped homodecamer, composed of two pentamers of five dimers.

The catalysed reaction is GTP + H2O = 7,8-dihydroneopterin 3'-triphosphate + formate + H(+). The protein operates within cofactor biosynthesis; 7,8-dihydroneopterin triphosphate biosynthesis; 7,8-dihydroneopterin triphosphate from GTP: step 1/1. The polypeptide is GTP cyclohydrolase 1 (folE) (Helicobacter pylori (strain ATCC 700392 / 26695) (Campylobacter pylori)).